We begin with the raw amino-acid sequence, 505 residues long: DNA primase DnaG (505 aa).

Residues 167–241 (DAVIVVEGRA…DVDYVAFAPP (75 aa)) enclose the Toprim domain. 3 residues coordinate Mg(2+): Glu173, Asp215, and Asp217. The disordered stretch occupies residues 268–410 (DEPNLREAAT…PLDNEPRSIE (143 aa)). The span at 318–327 (AGVVAGGARS) shows a compositional bias: low complexity. 2 stretches are compositionally biased toward acidic residues: residues 349–376 (GEVDEVGEDREGDMESDSDTADINDAEF) and 384–402 (PNLDEAADAESVEETDAPL).

The protein belongs to the archaeal DnaG primase family. In terms of assembly, forms a ternary complex with MCM helicase and DNA. It depends on Mg(2+) as a cofactor.

The catalysed reaction is ssDNA + n NTP = ssDNA/pppN(pN)n-1 hybrid + (n-1) diphosphate.. Functionally, RNA polymerase that catalyzes the synthesis of short RNA molecules used as primers for DNA polymerase during DNA replication. The polypeptide is DNA primase DnaG (Halorubrum lacusprofundi (strain ATCC 49239 / DSM 5036 / JCM 8891 / ACAM 34)).